The chain runs to 231 residues: NADH-ubiquinone oxidoreductase chain 4 (231 aa).

Helical transmembrane passes span 1–21, 34–54, 63–85, 89–111, 118–138, and 169–189; these read PIAG…YGII, MFLP…LTCL, IAYS…TPWG, AMAL…NTTY, ILIL…WWLL, and TIIL…HMFL.

The protein belongs to the complex I subunit 4 family.

The protein localises to the mitochondrion membrane. The catalysed reaction is a ubiquinone + NADH + 5 H(+)(in) = a ubiquinol + NAD(+) + 4 H(+)(out). Functionally, core subunit of the mitochondrial membrane respiratory chain NADH dehydrogenase (Complex I) that is believed to belong to the minimal assembly required for catalysis. Complex I functions in the transfer of electrons from NADH to the respiratory chain. The immediate electron acceptor for the enzyme is believed to be ubiquinone. The polypeptide is NADH-ubiquinone oxidoreductase chain 4 (MT-ND4) (Trimeresurus cantori (Cantor's pit viper)).